We begin with the raw amino-acid sequence, 430 residues long: Phosphomethylpyrimidine synthase (430 aa).

Substrate is bound by residues Asn-67, Met-96, Tyr-125, His-161, 183–185, 224–227, and Glu-263; these read SRG and DALR. His-267 lines the Zn(2+) pocket. Substrate is bound at residue Tyr-290. His-331 contributes to the Zn(2+) binding site. [4Fe-4S] cluster contacts are provided by Cys-406, Cys-409, and Cys-413.

Belongs to the ThiC family. As to quaternary structure, homodimer. It depends on [4Fe-4S] cluster as a cofactor.

The enzyme catalyses 5-amino-1-(5-phospho-beta-D-ribosyl)imidazole + S-adenosyl-L-methionine = 4-amino-2-methyl-5-(phosphooxymethyl)pyrimidine + CO + 5'-deoxyadenosine + formate + L-methionine + 3 H(+). It functions in the pathway cofactor biosynthesis; thiamine diphosphate biosynthesis. Functionally, catalyzes the synthesis of the hydroxymethylpyrimidine phosphate (HMP-P) moiety of thiamine from aminoimidazole ribotide (AIR) in a radical S-adenosyl-L-methionine (SAM)-dependent reaction. This Campylobacter jejuni (strain RM1221) protein is Phosphomethylpyrimidine synthase.